A 566-amino-acid polypeptide reads, in one-letter code: UvrABC system protein C (566 aa).

The GIY-YIG domain maps to 16–93; that stretch reads EKPGVYLFKK…IQQYKPRYNV (78 aa). One can recognise a UVR domain in the interval 199 to 234; it reads AEVLPKLYEKIEEFSKELMFEKCAHIRDQIIALENL.

It belongs to the UvrC family. Interacts with UvrB in an incision complex.

It localises to the cytoplasm. Its function is as follows. The UvrABC repair system catalyzes the recognition and processing of DNA lesions. UvrC both incises the 5' and 3' sides of the lesion. The N-terminal half is responsible for the 3' incision and the C-terminal half is responsible for the 5' incision. The sequence is that of UvrABC system protein C from Aquifex aeolicus (strain VF5).